The following is a 200-amino-acid chain: Large ribosomal subunit protein uL4 (200 aa).

Residues 42–65 (TRAQKTRSEVSGGGAKPWRQKGTG) are disordered.

Belongs to the universal ribosomal protein uL4 family. Part of the 50S ribosomal subunit.

Functionally, one of the primary rRNA binding proteins, this protein initially binds near the 5'-end of the 23S rRNA. It is important during the early stages of 50S assembly. It makes multiple contacts with different domains of the 23S rRNA in the assembled 50S subunit and ribosome. In terms of biological role, forms part of the polypeptide exit tunnel. This Aliivibrio fischeri (strain MJ11) (Vibrio fischeri) protein is Large ribosomal subunit protein uL4.